The chain runs to 435 residues: Methylenetetrahydrofolate--tRNA-(uracil-5-)-methyltransferase TrmFO (435 aa).

9-14 provides a ligand contact to FAD; sequence GAGLAG.

It belongs to the MnmG family. TrmFO subfamily. The cofactor is FAD.

It localises to the cytoplasm. It carries out the reaction uridine(54) in tRNA + (6R)-5,10-methylene-5,6,7,8-tetrahydrofolate + NADH + H(+) = 5-methyluridine(54) in tRNA + (6S)-5,6,7,8-tetrahydrofolate + NAD(+). It catalyses the reaction uridine(54) in tRNA + (6R)-5,10-methylene-5,6,7,8-tetrahydrofolate + NADPH + H(+) = 5-methyluridine(54) in tRNA + (6S)-5,6,7,8-tetrahydrofolate + NADP(+). Functionally, catalyzes the folate-dependent formation of 5-methyl-uridine at position 54 (M-5-U54) in all tRNAs. The protein is Methylenetetrahydrofolate--tRNA-(uracil-5-)-methyltransferase TrmFO of Staphylococcus saprophyticus subsp. saprophyticus (strain ATCC 15305 / DSM 20229 / NCIMB 8711 / NCTC 7292 / S-41).